Consider the following 139-residue polypeptide: DNA-directed RNA polymerase II subunit Rpb4 (139 aa).

Belongs to the eukaryotic RPB4 RNA polymerase subunit family. As to quaternary structure, RNA polymerase II consists of 12 different subunits.

The protein resides in the nucleus. The protein localises to the chromosome. Functionally, DNA-dependent RNA polymerase catalyzes the transcription of DNA into RNA using the four ribonucleoside triphosphates as substrates. Associates with POLR2G. The chain is DNA-directed RNA polymerase II subunit Rpb4 from Drosophila melanogaster (Fruit fly).